The sequence spans 129 residues: Small ribosomal subunit protein uS11 (129 aa).

It belongs to the universal ribosomal protein uS11 family. Part of the 30S ribosomal subunit. Interacts with proteins S7 and S18. Binds to IF-3.

Its function is as follows. Located on the platform of the 30S subunit, it bridges several disparate RNA helices of the 16S rRNA. Forms part of the Shine-Dalgarno cleft in the 70S ribosome. The sequence is that of Small ribosomal subunit protein uS11 from Macrococcus caseolyticus (strain JCSC5402) (Macrococcoides caseolyticum).